A 118-amino-acid chain; its full sequence is MASGRSLLTGLFVGGIIGGAAVLLTAPSSGKQLREKMKTNYDSFEETIKRLKSDGLALKDQLIKAAKESTDVIKDVGGELQTSIKKWQEEIKPHQQDLQKEIADIEEKIRQLEKTLQN.

Residues 7–27 (LLTGLFVGGIIGGAAVLLTAP) traverse the membrane as a helical segment. Positions 31-118 (KQLREKMKTN…IRQLEKTLQN (88 aa)) form a coiled coil.

It localises to the cell membrane. This is an uncharacterized protein from Bacillus subtilis (strain 168).